The following is a 152-amino-acid chain: Deoxyuridine 5'-triphosphate nucleotidohydrolase (152 aa).

Residues 72 to 74 (RSG), Asn-85, and 89 to 91 (TID) each bind substrate.

This sequence belongs to the dUTPase family. The cofactor is Mg(2+).

The catalysed reaction is dUTP + H2O = dUMP + diphosphate + H(+). Its pathway is pyrimidine metabolism; dUMP biosynthesis; dUMP from dCTP (dUTP route): step 2/2. In terms of biological role, this enzyme is involved in nucleotide metabolism: it produces dUMP, the immediate precursor of thymidine nucleotides and it decreases the intracellular concentration of dUTP so that uracil cannot be incorporated into DNA. This chain is Deoxyuridine 5'-triphosphate nucleotidohydrolase, found in Afipia carboxidovorans (strain ATCC 49405 / DSM 1227 / KCTC 32145 / OM5) (Oligotropha carboxidovorans).